Here is a 482-residue protein sequence, read N- to C-terminus: Rhamnulokinase (482 aa).

An ATP-binding site is contributed by 13–17 (ASSGR). Residues Gly-83 and 232 to 234 (HDT) each bind substrate. The active-site Proton acceptor is Asp-233. An ATP-binding site is contributed by Thr-255. Residue Asn-292 coordinates substrate. Asn-300 contributes to the ATP binding site. Residues Cys-349 and Cys-366 are joined by a disulfide bond. Gly-398 contributes to the ATP binding site. A disulfide bridge connects residues Cys-409 and Cys-413.

This sequence belongs to the rhamnulokinase family. Mg(2+) is required as a cofactor.

The catalysed reaction is L-rhamnulose + ATP = L-rhamnulose 1-phosphate + ADP + H(+). It functions in the pathway carbohydrate degradation; L-rhamnose degradation; glycerone phosphate from L-rhamnose: step 2/3. In terms of biological role, involved in the catabolism of L-rhamnose (6-deoxy-L-mannose). Catalyzes the transfer of the gamma-phosphate group from ATP to the 1-hydroxyl group of L-rhamnulose to yield L-rhamnulose 1-phosphate. In Mannheimia succiniciproducens (strain KCTC 0769BP / MBEL55E), this protein is Rhamnulokinase.